We begin with the raw amino-acid sequence, 832 residues long: Translation initiation factor IF-2 (832 aa).

Residues methionine 1 to glutamate 244 are disordered. Polar residues predominate over residues threonine 18 to histidine 27. Residues lysine 81–alanine 141 are compositionally biased toward basic and acidic residues. The segment covering serine 142–alanine 171 has biased composition (low complexity). Composition is skewed to basic and acidic residues over residues proline 178 to arginine 201 and arginine 227 to glutamate 244. Positions proline 329–glutamate 497 constitute a tr-type G domain. The tract at residues glycine 338 to threonine 345 is G1. Glycine 338–threonine 345 contacts GTP. Residues glycine 363–histidine 367 are G2. The interval aspartate 385–glycine 388 is G3. GTP contacts are provided by residues aspartate 385 to histidine 389 and asparagine 439 to aspartate 442. The segment at asparagine 439–aspartate 442 is G4. The segment at serine 475–isoleucine 477 is G5.

Belongs to the TRAFAC class translation factor GTPase superfamily. Classic translation factor GTPase family. IF-2 subfamily.

The protein localises to the cytoplasm. One of the essential components for the initiation of protein synthesis. Protects formylmethionyl-tRNA from spontaneous hydrolysis and promotes its binding to the 30S ribosomal subunits. Also involved in the hydrolysis of GTP during the formation of the 70S ribosomal complex. The protein is Translation initiation factor IF-2 of Dinoroseobacter shibae (strain DSM 16493 / NCIMB 14021 / DFL 12).